Reading from the N-terminus, the 932-residue chain is Adhesion G protein-coupled receptor E2 (932 aa).

Positions 1-15 are cleaved as a signal peptide; sequence MWGFWLLLFWGFSGT. Residues 16–652 are Extracellular-facing; that stretch reads HRWGMTTLAI…TMEFSLYIIS (637 aa). EGF-like domains are found at residues 32-69 and 81-119; these read GVNECQDTTTCPAYATCTDTTESYYCTCKQGFLPSNGQ and DVNECLRSDSPCGSNSVCTNIPGRARCSCLSGFSSSAGG. Cystine bridges form between Cys36–Cys48, Cys42–Cys57, Cys85–Cys98, Cys92–Cys107, Cys137–Cys149, Cys143–Cys158, Cys160–Cys171, Cys177–Cys189, Cys183–Cys198, Cys226–Cys239, and Cys233–Cys248. Residues 133 to 172 form the EGF-like 3; calcium-binding domain; sequence DVDECLTIGICPKNSNCSNSVGSYSCTCQSGFVSNGSTCE. Residues Asn148 and Asn167 are each glycosylated (N-linked (GlcNAc...) asparagine). Residues 173–210 enclose the EGF-like 4; calcium-binding domain; that stretch reads DEDECVTRNACPEHATCHNTLGSYYCTCNEGLEFSGGG. Residues 222 to 260 form the EGF-like 5; calcium-binding domain; it reads DVDECSRNSTLCGPSFICINTLGSYSCSCPAGFSLSTFQ. Asn229 is a glycosylation site (N-linked (GlcNAc...) asparagine). Asn269, Asn283, Asn309, Asn333, Asn344, Asn363, Asn405, Asn417, Asn474, and Asn499 each carry an N-linked (GlcNAc...) asparagine glycan. Positions 272 to 307 constitute an EGF-like 6; calcium-binding domain; that stretch reads DIDECDDICPSNSSCTNTLGSYFCTCHPGFASSNGQ. Intrachain disulfides connect Cys276/Cys286 and Cys280/Cys295. The 36-residue stretch at 319–354 folds into the EGF-like 7; calcium-binding domain; the sequence is DIDECTQDPFRCGRNSSCTNVPGSYNCSCLPDFRMD. Disulfide bonds link Cys323/Cys336 and Cys330/Cys345. The GAIN-B domain occupies 482-643; it reads EYLEIESKVI…AIIMASGELT (162 aa). Residues 507 to 509 carry the Cell attachment site motif; the sequence is RGD. Intrachain disulfides connect Cys596-Cys625 and Cys613-Cys627. The tract at residues 596 to 643 is GPS; sequence CVSWNTDVEDGRWTPSGCETVEASETHTVCSCNRMTNLAIIMASGELT. A helical transmembrane segment spans residues 653–673; that stretch reads YVGTVISLVCLALAIATFLLF. Residues 674–681 lie on the Cytoplasmic side of the membrane; sequence RAVQNHNT. A helical transmembrane segment spans residues 682-702; sequence YLHLHLCVCLFLAKILFLTGI. The Extracellular segment spans residues 703 to 719; that stretch reads DKTDNQTACAIIAGFLH. Asn707 is a glycosylation site (N-linked (GlcNAc...) asparagine). Residues 720–740 traverse the membrane as a helical segment; that stretch reads YLFLACFFWMLVEAVMLFLMV. The Cytoplasmic portion of the chain corresponds to 741-756; sequence RNLKVVNYFSSRNIKM. A helical transmembrane segment spans residues 757 to 777; it reads LHLCAFGYGLPVVVVIISATV. The Extracellular portion of the chain corresponds to 778–795; sequence HPWGYGMHNRCWLNTETG. A helical transmembrane segment spans residues 796–816; it reads FIWSFLGPVCMIITINSALLA. The Cytoplasmic segment spans residues 817 to 849; the sequence is WTLWVLRQKLCSVNSEVSKLKDTRLLTFKAIAQ. The helical transmembrane segment at 850-870 threads the bilayer; it reads IFILGCSWVLGIFQIGPLASI. Residues 871–872 are Extracellular-facing; sequence MA. A helical membrane pass occupies residues 873–893; the sequence is YLFTTINSLQGAFIFLIHCLL. The Cytoplasmic portion of the chain corresponds to 894–932; it reads NRQVRDEYRKLLTRKTDLSSHSQTSGILLSSMPSTSKTG.

It belongs to the G-protein coupled receptor 2 family. Adhesion G-protein coupled receptor (ADGR) subfamily.

The protein resides in the cell membrane. Its function is as follows. Orphan receptor involved in cell adhesion and probably in cell-cell interactions involved specifically cells of the immune system. May play a role in regulatory T-cells (Treg) development. This Rattus norvegicus (Rat) protein is Adhesion G protein-coupled receptor E2 (Adgre1).